A 359-amino-acid chain; its full sequence is Cytoplasmic tRNA 2-thiolation protein 1 (359 aa).

The protein belongs to the TtcA family. CTU1/NCS6/ATPBD3 subfamily. As to quaternary structure, interacts with NCS2 and URM1. May act by forming a heterodimer with NCS2. Component of a large molecular weight complex of more than 250 kDa.

It is found in the cytoplasm. Its subcellular location is the mitochondrion. The protein operates within tRNA modification; 5-methoxycarbonylmethyl-2-thiouridine-tRNA biosynthesis. Its function is as follows. Plays a central role in 2-thiolation of mcm(5)S(2)U at tRNA wobble positions of tRNA(Lys), tRNA(Glu) and tRNA(Gln). Directly binds tRNAs and probably acts by catalyzing adenylation of tRNAs, an intermediate required for 2-thiolation. It is unclear whether it acts as a sulfurtransferase that transfers sulfur from thiocarboxylated URM1 onto the uridine of tRNAs at wobble position. Prior mcm(5) tRNA modification by the elongator complex is required for 2-thiolation. May also be involved in protein urmylation. May also be involved in protein urmylation and in invasive and pseudohyphal growth. In Saccharomyces cerevisiae (strain ATCC 204508 / S288c) (Baker's yeast), this protein is Cytoplasmic tRNA 2-thiolation protein 1.